The chain runs to 793 residues: Phenylalanine--tRNA ligase beta subunit (793 aa).

Residues 39–148 (AAPFKGVKAA…EGDFPGVDLH (110 aa)) form the tRNA-binding domain. The region spanning 401–476 (PPQATIILRK…RLYGYDRLPS (76 aa)) is the B5 domain. Residues aspartate 454, aspartate 460, glutamate 463, and glutamate 464 each coordinate Mg(2+). Residues 699 to 792 (SKFPAIRRDI…LVTELGAIIR (94 aa)) form the FDX-ACB domain.

This sequence belongs to the phenylalanyl-tRNA synthetase beta subunit family. Type 1 subfamily. Tetramer of two alpha and two beta subunits. It depends on Mg(2+) as a cofactor.

Its subcellular location is the cytoplasm. It carries out the reaction tRNA(Phe) + L-phenylalanine + ATP = L-phenylalanyl-tRNA(Phe) + AMP + diphosphate + H(+). This Nitrosococcus oceani (strain ATCC 19707 / BCRC 17464 / JCM 30415 / NCIMB 11848 / C-107) protein is Phenylalanine--tRNA ligase beta subunit.